A 95-amino-acid chain; its full sequence is Small ribosomal subunit protein uS19 (95 aa).

It belongs to the universal ribosomal protein uS19 family.

In terms of biological role, protein S19 forms a complex with S13 that binds strongly to the 16S ribosomal RNA. The sequence is that of Small ribosomal subunit protein uS19 from Myxococcus xanthus (strain DK1622).